A 417-amino-acid polypeptide reads, in one-letter code: Riboflavin biosynthesis protein RibBA (417 aa).

The tract at residues 1–204 is DHBP synthase; that stretch reads MTRLDSIERA…IADLIEWRRK (204 aa). D-ribulose 5-phosphate is bound by residues 28–29, aspartate 33, 141–145, and glutamate 165; these read RE and RPGHT. Residue glutamate 29 coordinates Mg(2+). Histidine 144 contacts Mg(2+). Residues 205–417 are GTP cyclohydrolase II; it reads HEKHVQRIAE…LDDHPEADGA (213 aa). Position 259-263 (259-263) interacts with GTP; sequence RVHSE. Zn(2+) contacts are provided by cysteine 264, cysteine 275, and cysteine 277. GTP-binding positions include glutamine 280, 303 to 305, and threonine 325; that span reads EGR. Catalysis depends on aspartate 337, which acts as the Proton acceptor; for GTP cyclohydrolase activity. The Nucleophile; for GTP cyclohydrolase activity role is filled by arginine 339. GTP-binding residues include threonine 360 and lysine 365.

The protein in the N-terminal section; belongs to the DHBP synthase family. It in the C-terminal section; belongs to the GTP cyclohydrolase II family. Mg(2+) serves as cofactor. It depends on Mn(2+) as a cofactor. Requires Zn(2+) as cofactor.

The catalysed reaction is D-ribulose 5-phosphate = (2S)-2-hydroxy-3-oxobutyl phosphate + formate + H(+). It carries out the reaction GTP + 4 H2O = 2,5-diamino-6-hydroxy-4-(5-phosphoribosylamino)-pyrimidine + formate + 2 phosphate + 3 H(+). Its pathway is cofactor biosynthesis; riboflavin biosynthesis; 2-hydroxy-3-oxobutyl phosphate from D-ribulose 5-phosphate: step 1/1. The protein operates within cofactor biosynthesis; riboflavin biosynthesis; 5-amino-6-(D-ribitylamino)uracil from GTP: step 1/4. Catalyzes the conversion of D-ribulose 5-phosphate to formate and 3,4-dihydroxy-2-butanone 4-phosphate. In terms of biological role, catalyzes the conversion of GTP to 2,5-diamino-6-ribosylamino-4(3H)-pyrimidinone 5'-phosphate (DARP), formate and pyrophosphate. This Mycobacteroides abscessus (strain ATCC 19977 / DSM 44196 / CCUG 20993 / CIP 104536 / JCM 13569 / NCTC 13031 / TMC 1543 / L948) (Mycobacterium abscessus) protein is Riboflavin biosynthesis protein RibBA.